The primary structure comprises 216 residues: Protein-L-isoaspartate O-methyltransferase (216 aa).

Ser-62 is a catalytic residue.

This sequence belongs to the methyltransferase superfamily. L-isoaspartyl/D-aspartyl protein methyltransferase family.

Its subcellular location is the cytoplasm. It catalyses the reaction [protein]-L-isoaspartate + S-adenosyl-L-methionine = [protein]-L-isoaspartate alpha-methyl ester + S-adenosyl-L-homocysteine. Functionally, catalyzes the methyl esterification of L-isoaspartyl residues in peptides and proteins that result from spontaneous decomposition of normal L-aspartyl and L-asparaginyl residues. It plays a role in the repair and/or degradation of damaged proteins. In Methanospirillum hungatei JF-1 (strain ATCC 27890 / DSM 864 / NBRC 100397 / JF-1), this protein is Protein-L-isoaspartate O-methyltransferase.